The following is a 291-amino-acid chain: m-AAA protease-interacting protein 1, mitochondrial (291 aa).

A mitochondrion-targeting transit peptide spans 1-96 (MALAARLLPL…SLPASPSRSY (96 aa)).

As to quaternary structure, interacts with AFG3L2. Interacts with SPG7. Interacts with SMDT1/EMRE (via the N-terminal transit peptide); interaction is direct and takes place before maturation of SMDT1/EMRE.

It localises to the mitochondrion matrix. Its function is as follows. Promotes sorting of SMDT1/EMRE in mitochondria by ensuring its maturation. Interacts with the transit peptide region of SMDT1/EMRE precursor protein in the mitochondrial matrix, leading to protect it against protein degradation by YME1L1, thereby ensuring SMDT1/EMRE maturation by the mitochondrial processing peptidase (PMPCA and PMPCB). In Mus musculus (Mouse), this protein is m-AAA protease-interacting protein 1, mitochondrial.